A 68-amino-acid chain; its full sequence is Cell division protein ZapB (68 aa).

Residues 3–58 are a coiled coil; sequence LELLSKLETKIQAALETIELLKMELEEEKQKNHTLNEQNQQLSQDLTSWNEKVTGL.

The protein belongs to the ZapB family. In terms of assembly, homodimer. The ends of the coiled-coil dimer bind to each other, forming polymers. Interacts with FtsZ.

Its subcellular location is the cytoplasm. Functionally, non-essential, abundant cell division factor that is required for proper Z-ring formation. It is recruited early to the divisome by direct interaction with FtsZ, stimulating Z-ring assembly and thereby promoting cell division earlier in the cell cycle. Its recruitment to the Z-ring requires functional FtsA or ZipA. The chain is Cell division protein ZapB from Shewanella loihica (strain ATCC BAA-1088 / PV-4).